The chain runs to 667 residues: Primary amine oxidase (667 aa).

A signal peptide spans lysine 1–serine 18. N-linked (GlcNAc...) asparagine glycosylation occurs at asparagine 149. The cysteines at positions 155 and 176 are disulfide-linked. A disordered region spans residues proline 216 to glycine 246. Over residues alanine 218–serine 229 the composition is skewed to polar residues. Asparagine 252 carries N-linked (GlcNAc...) asparagine glycosylation. Phenylalanine 316 to serine 327 contributes to the substrate binding site. Catalysis depends on aspartate 318, which acts as the Proton acceptor. Cysteines 337 and 363 form a disulfide. Asparagine 382 carries N-linked (GlcNAc...) asparagine glycosylation. Valine 402–asparagine 407 is a substrate binding site. Tyrosine 405 acts as the Schiff-base intermediate with substrate; via topaquinone in catalysis. Tyrosine 405 carries the post-translational modification 2',4',5'-topaquinone. Positions 460 and 462 each coordinate Cu cation. Mn(2+)-binding residues include aspartate 469, phenylalanine 470, and aspartate 471. Asparagine 576 carries N-linked (GlcNAc...) asparagine glycosylation. Mn(2+) is bound by residues aspartate 610 and isoleucine 611. Histidine 621 serves as a coordination point for Cu cation.

Belongs to the copper/topaquinone oxidase family. Homodimer. Cu cation is required as a cofactor. Requires Zn(2+) as cofactor. L-topaquinone serves as cofactor. The cofactor is Mn(2+). Post-translationally, glycosylated; contains two carbohydrate chains per monomer. In terms of processing, topaquinone (TPQ) is generated by copper-dependent autoxidation of a specific tyrosyl residue.

It catalyses the reaction a primary methyl amine + O2 + H2O = an aldehyde + H2O2 + NH4(+). In Lens culinaris (Lentil), this protein is Primary amine oxidase.